A 337-amino-acid chain; its full sequence is MGFTYKDSGVDIDAADLSVQMIKRYARQTHIDGVLGDIGNFGAFFQLDGSLRQPVLVSGADGVGTKLKVAFMMDKHDTVGIDCVAMCVNDILVHGARPLFFLDYIAVGKLIPEKISQIVKGIAEGCTQAGCALIGGETAQMPDMYKEEEYDLAGFAVGVVEREKLLDGSKIKQRDAVIGLASSGLHSNGFSLVRKVLLGKMKVDEYISDLKKTLGEELLTPTKIYVRTVLDVLNDKIHGMAHITGGGLLENLPRILPEGLEFRIDKNSWEVPVIFKIIQRLGKIDSKEMYRTFNMGIGFVMVVERDEVENLLRKLNELGQNAWVIGDIVPGEKGVII.

The protein belongs to the AIR synthase family.

Its subcellular location is the cytoplasm. It catalyses the reaction 2-formamido-N(1)-(5-O-phospho-beta-D-ribosyl)acetamidine + ATP = 5-amino-1-(5-phospho-beta-D-ribosyl)imidazole + ADP + phosphate + H(+). Its pathway is purine metabolism; IMP biosynthesis via de novo pathway; 5-amino-1-(5-phospho-D-ribosyl)imidazole from N(2)-formyl-N(1)-(5-phospho-D-ribosyl)glycinamide: step 2/2. The protein is Phosphoribosylformylglycinamidine cyclo-ligase of Pseudothermotoga lettingae (strain ATCC BAA-301 / DSM 14385 / NBRC 107922 / TMO) (Thermotoga lettingae).